The sequence spans 120 residues: Phosphoribosyl-AMP cyclohydrolase (120 aa).

Asp75 contributes to the Mg(2+) binding site. Residue Cys76 participates in Zn(2+) binding. Residues Asp77 and Asp79 each contribute to the Mg(2+) site. Cys92 and Cys99 together coordinate Zn(2+).

Belongs to the PRA-CH family. As to quaternary structure, homodimer. The cofactor is Mg(2+). It depends on Zn(2+) as a cofactor.

The protein resides in the cytoplasm. The catalysed reaction is 1-(5-phospho-beta-D-ribosyl)-5'-AMP + H2O = 1-(5-phospho-beta-D-ribosyl)-5-[(5-phospho-beta-D-ribosylamino)methylideneamino]imidazole-4-carboxamide. Its pathway is amino-acid biosynthesis; L-histidine biosynthesis; L-histidine from 5-phospho-alpha-D-ribose 1-diphosphate: step 3/9. Functionally, catalyzes the hydrolysis of the adenine ring of phosphoribosyl-AMP. This chain is Phosphoribosyl-AMP cyclohydrolase, found in Methanosarcina acetivorans (strain ATCC 35395 / DSM 2834 / JCM 12185 / C2A).